Here is a 310-residue protein sequence, read N- to C-terminus: Solute carrier family 25 member 47 (310 aa).

Solcar repeat units follow at residues 1 to 80 (MDFV…CLAH), 93 to 208 (PTKA…LCEW), and 217 to 304 (PDVL…VLRL). Helical transmembrane passes span 3–23 (FVAGAIGGVCGVAVGYPLDTV), 55–75 (GLSLPVCTVSLVSSVSFGTYH), 98–114 (ITLSGCASGLVRVFLTS), 194–210 (SFATYFLSYAMLCEWLT), 219–239 (VLGVLVAGGCAGVLAWAVATP), and 280–298 (LALNCCRAFPVNMVVFVAY).

Belongs to the mitochondrial carrier (TC 2.A.29) family. In terms of tissue distribution, specifically expressed in liver (at protein level).

Its subcellular location is the mitochondrion inner membrane. It localises to the mitochondrion outer membrane. It catalyses the reaction NAD(+)(in) = NAD(+)(out). The catalysed reaction is acetyl-CoA(in) = acetyl-CoA(out). Its function is as follows. Mitochondrial NAD(+) transporter that acts as a 'metabolic gate' in hepatic lipogenesis. Provides NAD(+) substrate to mitochondrial SIRT3 deacetylase and enables its NAD(+)-dependent activities in mitochondrial energy metabolism. This triggers downstream activation of PRKAA1/AMPK-alpha signaling cascade that negatively regulates sterol regulatory element-binding protein (SREBP) transcriptional activities and ATP-consuming lipogenesis to restore cellular energy balance. May transport other mitochondrial metabolites having an aromatic nucleotide and phosphate groups, such as acetyl-CoA. Does not transport amino acids. The transport mechanism remains to be elucidated. The chain is Solute carrier family 25 member 47 from Mus musculus (Mouse).